The primary structure comprises 181 residues: Germinal center-associated signaling and motility protein (181 aa).

Serine 102 carries the phosphoserine modification. The span at 117 to 128 shows a compositional bias: basic and acidic residues; the sequence is AERHKESSRGTE. Positions 117-181 are disordered; it reads AERHKESSRG…PYETHFSYPQ (65 aa). Tyrosine 150 carries the phosphotyrosine modification.

Interacts with ACTB and MYH2; the interaction with MYH2 is increased by IL6-induced phosphorylation. Interacts (via C-terminus) with ARHGEF11 (via DH domain). Interacts with ARHGEF12. Interacts with SYK; the interaction increases after B-cell receptor stimulation, resulting in enhanced SYK autophosphorylation and activity. In terms of processing, phosphorylation on tyrosine residues can be induced by IL6. Phosphorylation is mediated by LYN. Targeted by the ubiquitin E3 ligase subunit FBXO10 to mediate its ubiquitination and degradation. Highly expressed in normal germinal center (GC) B-cells. Expressed in spleen and, to a lesser extent, bone marrow.

The protein resides in the cytoplasm. It localises to the cell membrane. Functionally, involved in the negative regulation of lymphocyte motility. It mediates the migration-inhibitory effects of IL6. Serves as a positive regulator of the RhoA signaling pathway. Enhancement of RhoA activation results in inhibition of lymphocyte and lymphoma cell motility by activation of its downstream effector ROCK. Is a regulator of B-cell receptor signaling, that acts through SYK kinase activation. This chain is Germinal center-associated signaling and motility protein (Gcsam), found in Mus musculus (Mouse).